The following is an 87-amino-acid chain: uncharacterized protein (87 aa).

A helical transmembrane segment spans residues 48–70 (GIYIPHTLIFWMCPRAMGTAITF).

Its subcellular location is the host membrane. This is an uncharacterized protein from Gallid herpesvirus 2 (strain Chicken/Md5/ATCC VR-987) (GaHV-2).